We begin with the raw amino-acid sequence, 321 residues long: Sporulation protein cse15 (321 aa).

2 coiled-coil regions span residues 37–70 (FHQKNNKLLKENTDMKEKLQQLSAELTHMSTKEK) and 108–205 (IEEK…KEKL). Basic and acidic residues-rich tracts occupy residues 234–243 (GTKQKEKTEE) and 282–293 (AKSHTIEELKNR). 2 disordered regions span residues 234-253 (GTKQKEKTEEEAPAAYAQPN) and 274-293 (AHAQSSDQAKSHTIEELKNR).

This chain is Sporulation protein cse15 (cse15), found in Bacillus subtilis (strain 168).